We begin with the raw amino-acid sequence, 524 residues long: Alkaline phosphatase, tissue-nonspecific isozyme (524 aa).

Positions 1–17 are cleaved as a signal peptide; it reads MILPFLVLAIGTCLTNS. Asp-60 contacts Mg(2+). Positions 60 and 110 each coordinate Zn(2+). The active-site Phosphoserine intermediate is the Ser-110. Ser-110 bears the Phosphoserine mark. A disulfide bridge links Cys-139 with Cys-201. The N-linked (GlcNAc...) asparagine glycan is linked to Asn-140. Thr-173 contacts Mg(2+). An N-linked (GlcNAc...) asparagine glycan is attached at Asn-230. Position 235 (Glu-235) interacts with Ca(2+). N-linked (GlcNAc...) asparagine glycosylation is present at Asn-271. Ca(2+)-binding residues include Phe-290 and Glu-291. Asn-303 is a glycosylation site (N-linked (GlcNAc...) asparagine). Residue Asp-306 participates in Ca(2+) binding. Residue Glu-332 coordinates Mg(2+). 4 residues coordinate Zn(2+): Asp-337, His-341, Asp-378, and His-379. The N-linked (GlcNAc...) asparagine glycan is linked to Asn-430. His-454 serves as a coordination point for Zn(2+). Cys-489 and Cys-497 are oxidised to a cystine. Residue Ser-501 is the site of GPI-anchor amidated serine attachment. Residues 502–524 constitute a propeptide, removed in mature form; sequence SASSPSPGALLLPLALFPLRTLF.

Belongs to the alkaline phosphatase family. Homodimer. It depends on Mg(2+) as a cofactor. Zn(2+) serves as cofactor. Requires Ca(2+) as cofactor. N-glycosylated.

It is found in the cell membrane. It localises to the extracellular vesicle membrane. The protein resides in the mitochondrion membrane. Its subcellular location is the mitochondrion intermembrane space. It carries out the reaction a phosphate monoester + H2O = an alcohol + phosphate. The enzyme catalyses diphosphate + H2O = 2 phosphate + H(+). It catalyses the reaction pyridoxal 5'-phosphate + H2O = pyridoxal + phosphate. The catalysed reaction is phosphoethanolamine + H2O = ethanolamine + phosphate. It carries out the reaction N-phosphocreatine + H2O = creatine + phosphate. The enzyme catalyses ATP + H2O = ADP + phosphate + H(+). It catalyses the reaction ADP + H2O = AMP + phosphate + H(+). The catalysed reaction is AMP + H2O = adenosine + phosphate. Phosphatase activity is specifically inhibited by 5-((5-chloro-2-methoxyphenyl)sulfonamido)nicotinamide (SBI-425). Functionally, alkaline phosphatase that metabolizes various phosphate compounds and plays a key role in skeletal mineralization and adaptive thermogenesis. Has broad substrate specificity and can hydrolyze a considerable variety of compounds: however, only a few substrates, such as diphosphate (inorganic pyrophosphate; PPi), pyridoxal 5'-phosphate (PLP) and N-phosphocreatine are natural substrates. Plays an essential role in skeletal and dental mineralization via its ability to hydrolyze extracellular diphosphate, a potent mineralization inhibitor, to phosphate: it thereby promotes hydroxyapatite crystal formation and increases inorganic phosphate concentration. Acts in a non-redundant manner with PHOSPHO1 in skeletal mineralization: while PHOSPHO1 mediates the initiation of hydroxyapatite crystallization in the matrix vesicles (MVs), ALPL/TNAP catalyzes the spread of hydroxyapatite crystallization in the extracellular matrix. Also promotes dephosphorylation of osteopontin (SSP1), an inhibitor of hydroxyapatite crystallization in its phosphorylated state; it is however unclear whether ALPL/TNAP mediates SSP1 dephosphorylation via a direct or indirect manner. Catalyzes dephosphorylation of PLP to pyridoxal (PL), the transportable form of vitamin B6, in order to provide a sufficient amount of PLP in the brain, an essential cofactor for enzymes catalyzing the synthesis of diverse neurotransmitters. Additionally, also able to mediate ATP degradation in a stepwise manner to adenosine, thereby regulating the availability of ligands for purinergic receptors. Also capable of dephosphorylating microbial products, such as lipopolysaccharides (LPS) as well as other phosphorylated small-molecules, such as poly-inosine:cytosine (poly I:C). Acts as a key regulator of adaptive thermogenesis as part of the futile creatine cycle: localizes to the mitochondria of thermogenic fat cells and acts by mediating hydrolysis of N-phosphocreatine to initiate a futile cycle of creatine dephosphorylation and phosphorylation. During the futile creatine cycle, creatine and N-phosphocreatine are in a futile cycle, which dissipates the high energy charge of N-phosphocreatine as heat without performing any mechanical or chemical work. This Rattus norvegicus (Rat) protein is Alkaline phosphatase, tissue-nonspecific isozyme (Alpl).